We begin with the raw amino-acid sequence, 91 residues long: Small ribosomal subunit protein uS19 (91 aa).

The protein belongs to the universal ribosomal protein uS19 family.

Protein S19 forms a complex with S13 that binds strongly to the 16S ribosomal RNA. In Pseudoalteromonas atlantica (strain T6c / ATCC BAA-1087), this protein is Small ribosomal subunit protein uS19.